A 233-amino-acid chain; its full sequence is Favin (233 aa).

Mn(2+)-binding residues include glutamate 120 and aspartate 122. Aspartate 122, phenylalanine 124, asparagine 126, and aspartate 130 together coordinate Ca(2+). Mn(2+) is bound by residues aspartate 130 and histidine 137. N-linked (GlcNAc...) asparagine glycosylation is present at asparagine 168.

It belongs to the leguminous lectin family. Heterodimer of an alpha and a beta chain.

The chain is Favin from Vicia faba (Broad bean).